A 44-amino-acid polypeptide reads, in one-letter code: Antifungal protein R (44 aa).

It belongs to the thaumatin family.

Functionally, has antifungal activity. Inhibits the growth of Trichoderma viridae and Candida albicans. The polypeptide is Antifungal protein R (Hordeum vulgare (Barley)).